We begin with the raw amino-acid sequence, 171 residues long: Bursicon (171 aa).

An N-terminal signal peptide occupies residues 1–31 (MISSPSTPATFAAGSLVLLCLVLGGGHFALA). 5 cysteine pairs are disulfide-bonded: C47–C96, C61–C110, C71–C131, C75–C133, and C93–C136. In terms of domain architecture, CTCK spans 47-137 (CQVTPVIHVL…PLECMCRPCT (91 aa)).

As to quaternary structure, heterodimer of burs and pburs.

Its subcellular location is the secreted. Its function is as follows. Final heterodimeric neurohormone released at the end of the molting cycle, involved in the sclerotization (tanning) of the insect cuticle, melanization and wing spreading. The polypeptide is Bursicon (Culex pipiens pipiens (Northern house mosquito)).